A 2474-amino-acid chain; its full sequence is Serine/threonine-protein kinase TOR2 (2474 aa).

The interval 1–62 (MNKYINKYTT…NGPNDSGRVI (62 aa)) is disordered. Threonine 10 bears the Phosphothreonine mark. Positions 25-36 (HRTRKKLTHKSH) are enriched in basic residues. Positions 43-56 (STTSNTDSNHNGPN) are enriched in polar residues. HEAT repeat units follow at residues 588–626 (YSLT…KDDI), 636–674 (HSVS…PQLA), 676–710 (PDNL…VNPA), 756–793 (PYID…VGGK), 797–835 (RYLK…SSGY), 841–879 (LDYP…LDPY), 917–955 (YYPT…NLGL), 1039–1076 (RFVP…FGPN), 1079–1116 (DYSH…NINL), 1118–1155 (EMSS…QLGT), and 1292–1331 (SYQE…DDKP). Residues 1338-1922 (TLGKYAQKCH…VYPLMVAIKS (585 aa)) form the FAT domain. In terms of domain architecture, PI3K/PI4K catalytic spans 2097–2421 (FEPVFSVISS…EHKNAIRNAR (325 aa)). The interval 2103–2109 (VISSKQR) is G-loop. Positions 2276–2284 (GLGDRHPSN) are catalytic loop. The segment at 2296–2321 (HIDFGDCFEAAILREKFPEKVPFRLT) is activation loop. An FATC domain is found at 2442 to 2474 (NDLDVPEQVDKLIQQATSVENLCQHYIGWCPFW).

This sequence belongs to the PI3/PI4-kinase family. The target of rapamycin complex 1 (TORC1) is composed of at least KOG1, LST8, TCO89 and either TOR1 (TORC1-A) or TOR2 (TORC1-B). TORC1 binds to and is inhibited by FKBP-rapamycin. Interacts with PIB2; following activation of PIB2 by glutamine. The target of rapamycin complex 2 (TORC2) is composed of at least AVO1, AVO2, BIT61, LST8, TOR2 and TSC11. TORC2 forms a homodimer. Contrary to TORC1, TORC2 does not bind to and is not sensitive to FKBP-rapamycin. Interacts with SLM1 and SLM2.

Its subcellular location is the cell membrane. It is found in the vacuole membrane. It catalyses the reaction L-seryl-[protein] + ATP = O-phospho-L-seryl-[protein] + ADP + H(+). It carries out the reaction L-threonyl-[protein] + ATP = O-phospho-L-threonyl-[protein] + ADP + H(+). The catalysed reaction is a 1,2-diacyl-sn-glycero-3-phospho-(1D-myo-inositol) + ATP = a 1,2-diacyl-sn-glycero-3-phospho-(1D-myo-inositol 4-phosphate) + ADP + H(+). Its function is as follows. Phosphatidylinositol 3-kinase homolog, component of both TORC1 and TORC2. TORC1 regulates multiple cellular processes to control cell growth in response to environmental signals. Nutrient limitation and environmental stress signals cause inactivation of TORC1. Active TORC1 positively controls ribosome biogenesis via control of rRNA, ribosomal protein and tRNA gene expression, and rRNA processing. TORC1 positively controls protein biosynthesis by regulation of mRNA stability, translation initiation factor activity, and high-affinity amino acid permeases that serve to provide amino acids for use by the translation machinery. TORC1 also promotes growth by sequestering a number of nutrient and general stress-responsive transcription factors in the cytoplasm. TORC1 negatively controls macroautophagy, a process to recycle surplus cytoplasmic mass under nutrient starvation conditions. TORC1 controls many of these processes via TIP41-TAP42-mediated inhibition of the type 2A-related phosphatases PP2A and SIT4. In nutrient-rich conditions, responsible for the phosphorylation of AGC S6 kinase (S6K) YPK3, activating YPK3 kinase activity and promoting phosphorylation of ribosomal protein S6. Phosphorylates kinase SCH9 at 6 amino acids in the C-terminus, activating SCH9 kinase activity to properly regulate ribosome biogenesis, translation initiation, and entry into stationary phase. TORC2 regulates cell cycle-dependent polarization of the actin-cytoskeleton, cell wall integrity, and receptor endocytosis. TORC2 controls polarity of the actin cytoskeleton, which is required for orienting the secretory pathway toward discrete growth sites, via the RHO1/PKC1/MAPK cell integrity pathway by activating the RHO1 guanine nucleotide exchange factor ROM2. TORC2 phosphorylates the AGC kinase YPK2, an upstream effector of the cell integrity pathway. TORC2 negatively regulates calcineurin-dependent stress signaling via phosphorylation of its effector SLM1-SLM2. This Saccharomyces cerevisiae (strain ATCC 204508 / S288c) (Baker's yeast) protein is Serine/threonine-protein kinase TOR2 (TOR2).